The following is a 253-amino-acid chain: Ribosome-inactivating protein saporin-7 (253 aa).

Glu176 is a catalytic residue.

It belongs to the ribosome-inactivating protein family. Type 1 RIP subfamily.

The catalysed reaction is Endohydrolysis of the N-glycosidic bond at one specific adenosine on the 28S rRNA.. In terms of biological role, ribosome-inactivating protein of type 1, inhibits protein synthesis in animal cells. In Saponaria officinalis (Common soapwort), this protein is Ribosome-inactivating protein saporin-7 (SAP7).